Here is a 247-residue protein sequence, read N- to C-terminus: Probable transcriptional regulatory protein plu2109 (247 aa).

This sequence belongs to the TACO1 family.

Its subcellular location is the cytoplasm. This Photorhabdus laumondii subsp. laumondii (strain DSM 15139 / CIP 105565 / TT01) (Photorhabdus luminescens subsp. laumondii) protein is Probable transcriptional regulatory protein plu2109.